A 228-amino-acid chain; its full sequence is UPF0758 protein Reut_A2732 (228 aa).

Positions Gly102 to Leu224 constitute an MPN domain. His173, His175, and Asp186 together coordinate Zn(2+). The JAMM motif signature appears at His173–Asp186.

Belongs to the UPF0758 family.

The polypeptide is UPF0758 protein Reut_A2732 (Cupriavidus pinatubonensis (strain JMP 134 / LMG 1197) (Cupriavidus necator (strain JMP 134))).